Here is an 86-residue protein sequence, read N- to C-terminus: Probable weak neurotoxin NNAM2 (86 aa).

The N-terminal stretch at 1–21 (MKTLLLTLVVVTIVCLDLGYT) is a signal peptide. Disulfide bonds link cysteine 24/cysteine 45, cysteine 27/cysteine 32, cysteine 38/cysteine 63, cysteine 67/cysteine 78, and cysteine 79/cysteine 84.

It belongs to the three-finger toxin family. Ancestral subfamily. Orphan group II sub-subfamily. Expressed by the venom gland.

Its subcellular location is the secreted. Its function is as follows. Binds with low affinity to muscular (alpha-1-beta-1-delta-epsilon/CHRNA1-CHRNB1-CHRND-CHRNE) and very low affinity to neuronal (alpha-7/CHRNA7) nicotinic acetylcholine receptor (nAChR). The sequence is that of Probable weak neurotoxin NNAM2 from Naja atra (Chinese cobra).